The primary structure comprises 383 residues: tRNA (adenine(58)-N(1))-methyltransferase catalytic subunit TRM61 (383 aa).

S-adenosyl-L-methionine is bound by residues Val94, 121–124, Glu139, Arg144, 168–169, and Asp203; these read SGSF and DV. Ser302 is subject to Phosphoserine.

The protein belongs to the class I-like SAM-binding methyltransferase superfamily. TRM61 family. In terms of assembly, heterotetramer; composed of two copies of TRM6/GCD10 and two copies of TRM61/GCD14.

It is found in the nucleus. It catalyses the reaction adenosine(58) in tRNA + S-adenosyl-L-methionine = N(1)-methyladenosine(58) in tRNA + S-adenosyl-L-homocysteine + H(+). In terms of biological role, catalytic subunit of tRNA (adenine-N(1)-)-methyltransferase, which catalyzes the formation of N(1)-methyladenine at position 58 (m1A58) in initiator methionyl-tRNA. GCD14 is also required for repression of GCN4 mRNA translation by the upstream open reading frames (uORFs) under conditions of amino acid sufficiency. The chain is tRNA (adenine(58)-N(1))-methyltransferase catalytic subunit TRM61 (GCD14) from Saccharomyces cerevisiae (strain ATCC 204508 / S288c) (Baker's yeast).